The primary structure comprises 471 residues: MIVFRRFPTCLLHHIRQPASRSLLLESQRRSLSFTSYKYNSSHIDDDKSKKKLKNVFQMNSNRVIRKQKTKEELAKERFEEQLRSPNRFVRWGAIARSEKFSKGMTKYMIGAYVIFLIYGLFFTKKLFAKDKELERLLKKQEEGNANEYEALRIKELKGKLRRRDELKLEEYKKMQEEGIENFDDIRVQNFDQNKLNEQILPARDTTNFYQEKANEYDKAINMEERVIFLGKRRKWLMKHCQGDVLEVSCGTGRNIKYLDMSRINSITFLDSSENMMEITHKKFREKFPKYKKVAFVVGKAENLVDLAEKGKPSLENEKENQVKYDTIVEAFGLCSHEDPVKALNNFGKLLKPDGRIILLEHGRGQYDFINKILDNRAERRLNTWGCRWNLDLGEVLDDSDLELVEEKRTHLGTTWCIVAKRKGDVKKKDELGFVEKYLQSSIRKRMESFEKKDDMASKKELEPVPPVSKS.

Residues 1-39 (MIVFRRFPTCLLHHIRQPASRSLLLESQRRSLSFTSYKY) constitute a mitochondrion transit peptide. The Mitochondrial matrix portion of the chain corresponds to 40-103 (NSSHIDDDKS…AIARSEKFSK (64 aa)). Residues 104-123 (GMTKYMIGAYVIFLIYGLFF) form a helical membrane-spanning segment. Residues 124-471 (TKKLFAKDKE…LEPVPPVSKS (348 aa)) lie on the Mitochondrial intermembrane side of the membrane. Residues 450–463 (FEKKDDMASKKELE) show a composition bias toward basic and acidic residues. The interval 450-471 (FEKKDDMASKKELEPVPPVSKS) is disordered.

The protein belongs to the methyltransferase superfamily. METL family.

Its subcellular location is the mitochondrion inner membrane. In terms of biological role, mitochondrial methyltransferase which suppresses respiratory defects caused by OXA1 mutations when overexpressed. The polypeptide is Methyltransferase OMS1, mitochondrial (OMS1) (Saccharomyces cerevisiae (strain ATCC 204508 / S288c) (Baker's yeast)).